The following is a 397-amino-acid chain: Neuroplastin (397 aa).

The N-terminal stretch at 1-28 (MSGSSLPGALALSLLLVSGSLLPGPGAA) is a signal peptide. 3 consecutive Ig-like domains span residues 29-134 (QNAG…PSIT), 148-234 (PRIV…IEVK), and 237-327 (PDIT…ASVS). At 29–338 (QNAGFVKSPM…VLRVRSHLAP (310 aa)) the chain is on the extracellular side. Cysteines 52 and 116 form a disulfide. Residues 149–161 (RIVTSEEVIIRES) are narpin; mediates binding with FGFR1 and has antidepressant-like activity. The cysteines at positions 169 and 217 are disulfide-linked. N-linked (GlcNAc...) asparagine glycosylation is found at Asn-170, Asn-196, Asn-228, Asn-283, Asn-295, and Asn-316. Cys-258 and Cys-315 are disulfide-bonded. Residues 339-359 (LWPFLGILAEIIILVVIIVVY) form a helical membrane-spanning segment. The Cytoplasmic segment spans residues 360–397 (EKRKRPDEVPDDDEPAGPMKTNSTNNHKDKNLRQRNTN). The tract at residues 364 to 397 (RPDEVPDDDEPAGPMKTNSTNNHKDKNLRQRNTN) is disordered.

In terms of assembly, interacts with ATP2B1; this interaction stabilizes ATP2B1 and increases ATPase activity; this interaction controls T cell calcium homeostasis following T cell activation. Interacts with XKR8; promoting its localization at the cell membrane. Post-translationally, N-glycosylated. As to expression, isoform 1 and isoform 2 are widely expressed with variable levels in brain. Isoform 1 is expressed in cerebellum and midbrain. Isoform 1 and isoform 2 are expressed in cerebral cortex, hippocampus and striatum. Isoform 2 is more abundant in the cerebral cortex than isoform 1.

It localises to the cell membrane. The protein localises to the postsynaptic density. Functionally, probable homophilic and heterophilic cell adhesion molecule involved in long term potentiation at hippocampal excitatory synapses through activation of p38MAPK. May also regulate neurite outgrowth by activating the FGFR1 signaling pathway. May play a role in synaptic plasticity. Also acts as a chaperone for ATP2B1; stabilizes ATP2B1 and increases its ATPase activity. Promotes localization of XKR8 at the cell membrane. The protein is Neuroplastin (Nptn) of Mus musculus (Mouse).